Here is a 555-residue protein sequence, read N- to C-terminus: GMP synthase [glutamine-hydrolyzing] (555 aa).

Residues 8–234 form the Glutamine amidotransferase type-1 domain; the sequence is KILVLNFGSQ…AYNICKCKKQ (227 aa). The active-site Nucleophile; for GATase activity is Cys89. L-glutamine-binding residues include Gln93, Asn169, Asp172, and His208. Residues His208 and Glu210 each act as for GATase activity in the active site. The GMPS ATP-PPase domain maps to 235–430; sequence FDPIRYHELE…LNLPEEITNR (196 aa). Residue 262 to 268 participates in ATP binding; the sequence is SGGIDST. 5 residues coordinate XMP: Arg336, Gln476, Lys547, Ile552, and Glu553.

In terms of assembly, homodimer (via the GMPS ATP-PPase domain). Mg(2+) serves as cofactor.

The enzyme catalyses XMP + L-glutamine + ATP + H2O = GMP + L-glutamate + AMP + diphosphate + 2 H(+). It functions in the pathway purine metabolism; GMP biosynthesis; GMP from XMP (L-Gln route): step 1/1. Its activity is regulated as follows. The GATase domain is allosterically activated by the binding of substrates, ATP and XMP, to the ATPPase domain, thus ensuring that glutamine hydrolysis occurs only when the ATPPase domain is primed to receive ammonia. Inhibited by Na(+). Inhibited by the reaction product GMP. In terms of biological role, catalyzes the conversion of xanthine monophosphate (XMP) to GMP in the presence of glutamine and ATP through an adenyl-XMP intermediate, which is the final step of de novo synthesis of GMP. The conversion of XMP to GMP involves the coordinated action of the glutamine amidotransferase (GATase) domain that catalyzes the hydrolysis of the amide side chain of glutamine producing ammonia and the ATP pyrophosphatase (ATPPase) domain that catalyzes the synthesis of adenyl-XMP intermediate from ATP. The ammonia produced by the GATase domain is tunnelled to the ATP-PPase domain where it attacks the adenyl-XMP intermediate generating GMP. The polypeptide is GMP synthase [glutamine-hydrolyzing] (Plasmodium falciparum (isolate 3D7)).